Consider the following 150-residue polypeptide: UPF0178 protein Bcen2424_1660 (150 aa).

Belongs to the UPF0178 family.

This chain is UPF0178 protein Bcen2424_1660, found in Burkholderia cenocepacia (strain HI2424).